We begin with the raw amino-acid sequence, 257 residues long: Zinc transporter ZupT (257 aa).

The next 3 membrane-spanning stretches (helical) occupy residues 5-25, 32-52, and 61-81; these read LILT…GVLG, LLAF…LMEM, and GMSP…YFGL. Residues asparagine 120 and glutamate 123 each contribute to the Fe(2+) site. Zn(2+) contacts are provided by glutamate 123 and histidine 148. Helical transmembrane passes span 137–157, 171–191, 195–215, and 236–256; these read LGFG…LAVA, ILWA…AWLI, MISP…MVAL, and GVLC…TAGI. The Fe(2+) site is built by asparagine 149, glutamate 152, and glutamate 181. Glutamate 152 is a Zn(2+) binding site.

This sequence belongs to the ZIP transporter (TC 2.A.5) family. ZupT subfamily.

It is found in the cell inner membrane. It carries out the reaction Zn(2+)(in) = Zn(2+)(out). In terms of biological role, mediates zinc uptake. May also transport other divalent cations. This Escherichia coli O45:K1 (strain S88 / ExPEC) protein is Zinc transporter ZupT.